The chain runs to 320 residues: HPr kinase/phosphorylase (320 aa).

Active-site residues include His-141 and Lys-162. 156–163 is a binding site for ATP; sequence GHSGLGKS. Ser-163 lines the Mg(2+) pocket. The Proton acceptor; for phosphorylation activity. Proton donor; for dephosphorylation activity role is filled by Asp-180. An important for the catalytic mechanism of both phosphorylation and dephosphorylation region spans residues 204–213; it reads LEVRGLGILN. Residue Glu-205 participates in Mg(2+) binding. Arg-248 is a catalytic residue. Residues 269–274 form an important for the catalytic mechanism of dephosphorylation region; sequence PVAVGR.

It belongs to the HPrK/P family. In terms of assembly, homohexamer. Mg(2+) is required as a cofactor.

The catalysed reaction is [HPr protein]-L-serine + ATP = [HPr protein]-O-phospho-L-serine + ADP + H(+). The enzyme catalyses [HPr protein]-O-phospho-L-serine + phosphate + H(+) = [HPr protein]-L-serine + diphosphate. In terms of biological role, catalyzes the ATP- as well as the pyrophosphate-dependent phosphorylation of a specific serine residue in HPr, a phosphocarrier protein of the phosphoenolpyruvate-dependent sugar phosphotransferase system (PTS). HprK/P also catalyzes the pyrophosphate-producing, inorganic phosphate-dependent dephosphorylation (phosphorolysis) of seryl-phosphorylated HPr (P-Ser-HPr). This Neisseria meningitidis serogroup C / serotype 2a (strain ATCC 700532 / DSM 15464 / FAM18) protein is HPr kinase/phosphorylase.